The sequence spans 219 residues: Probable GTP-binding protein EngB (219 aa).

Residues 31-205 (VGVEIAFAGR…LSILNEWCHP (175 aa)) enclose the EngB-type G domain. GTP is bound by residues 39-46 (GRSNAGKS), 66-70 (GRTQL), 84-87 (DLPG), 151-154 (TKSD), and 184-186 (FSS). Ser46 and Thr68 together coordinate Mg(2+).

The protein belongs to the TRAFAC class TrmE-Era-EngA-EngB-Septin-like GTPase superfamily. EngB GTPase family. Mg(2+) serves as cofactor.

Necessary for normal cell division and for the maintenance of normal septation. The chain is Probable GTP-binding protein EngB from Shewanella denitrificans (strain OS217 / ATCC BAA-1090 / DSM 15013).